Consider the following 307-residue polypeptide: Putative S-adenosyl-L-methionine-dependent methyltransferase MMAR_4570 (307 aa).

S-adenosyl-L-methionine is bound by residues Asp128 and 157 to 158 (DL).

This sequence belongs to the UPF0677 family.

Its function is as follows. Exhibits S-adenosyl-L-methionine-dependent methyltransferase activity. This is Putative S-adenosyl-L-methionine-dependent methyltransferase MMAR_4570 from Mycobacterium marinum (strain ATCC BAA-535 / M).